Reading from the N-terminus, the 47-residue chain is Small, acid-soluble spore protein K (47 aa).

Positions 1-47 are disordered; that stretch reads MRNKAHGFPHRISFDGEPDRAKHASKRANGTINTKPQERMHQANPDQ. Residues 12–22 show a composition bias toward basic and acidic residues; sequence ISFDGEPDRAK.

This sequence belongs to the SspK family.

The protein localises to the spore core. In Halalkalibacterium halodurans (strain ATCC BAA-125 / DSM 18197 / FERM 7344 / JCM 9153 / C-125) (Bacillus halodurans), this protein is Small, acid-soluble spore protein K.